The sequence spans 57 residues: Protein translocase subunit SecE (57 aa).

Residues 33 to 53 form a helical membrane-spanning segment; sequence GAGIFLVGLLGFIIFAVMSFL.

This sequence belongs to the SecE/SEC61-gamma family. In terms of assembly, component of the Sec protein translocase complex. Heterotrimer consisting of SecY (alpha), SecG (beta) and SecE (gamma) subunits. The heterotrimers can form oligomers, although 1 heterotrimer is thought to be able to translocate proteins. Interacts with the ribosome. May interact with SecDF, and other proteins may be involved.

It localises to the cell membrane. Its function is as follows. Essential subunit of the Sec protein translocation channel SecYEG. Clamps together the 2 halves of SecY. May contact the channel plug during translocation. The sequence is that of Protein translocase subunit SecE from Haloferax mediterranei (strain ATCC 33500 / DSM 1411 / JCM 8866 / NBRC 14739 / NCIMB 2177 / R-4) (Halobacterium mediterranei).